Here is a 207-residue protein sequence, read N- to C-terminus: Large ribosomal subunit protein uL4 (207 aa).

The disordered stretch occupies residues 45–78 (RQGTHAVKNRSAVRGGGRKPWRQKGTGRARQGSI). Basic residues predominate over residues 60 to 71 (GGRKPWRQKGTG).

It belongs to the universal ribosomal protein uL4 family. In terms of assembly, part of the 50S ribosomal subunit.

Functionally, one of the primary rRNA binding proteins, this protein initially binds near the 5'-end of the 23S rRNA. It is important during the early stages of 50S assembly. It makes multiple contacts with different domains of the 23S rRNA in the assembled 50S subunit and ribosome. Its function is as follows. Forms part of the polypeptide exit tunnel. In Pediococcus pentosaceus (strain ATCC 25745 / CCUG 21536 / LMG 10740 / 183-1w), this protein is Large ribosomal subunit protein uL4.